The following is a 269-amino-acid chain: Calretinin (269 aa).

EF-hand domains are found at residues 14-49 (LSASQFLDVWRHFDADGNGYIEGKELENFFQELESA), 61-96 (SLGDKMKEFMHKYDKNADGKIEMAELAQILPTEENF), 105-140 (GSSSEFMEAWRRYDTDRSGYIEANELKGFLSDLLKK), 149-184 (KLQEYTQTILRMFDMNGDGKLGLSEMSRLLPVQENF), 193-228 (LSSEEFNAIFAFYDKDGSGFIDEHELDALLKDLYEK), and 230-265 (KKEMSIQQLTNYRRSIMNLSDGGKLYRKELEVVLCS). Residues aspartate 27, aspartate 29, asparagine 31, tyrosine 33, glutamate 38, aspartate 74, asparagine 76, aspartate 78, lysine 80, glutamate 85, aspartate 118, aspartate 120, serine 122, tyrosine 124, glutamate 129, aspartate 162, asparagine 164, aspartate 166, lysine 168, glutamate 173, aspartate 206, aspartate 208, serine 210, and glutamate 217 each contribute to the Ca(2+) site.

This sequence belongs to the calbindin family.

The protein resides in the synapse. It localises to the cell projection. Its subcellular location is the dendrite. In terms of biological role, calcium-binding protein involved in calcium homeostasis and signal transduction. It plays a critical role in buffering intracellular calcium levels and modulating calcium-dependent signaling pathways. Predominantly expressed in specific neuronal populations, influences synaptic plasticity and neuronal excitability, contributing to learning and memory. During embryonic development, it facilitates neuronal differentiation and maturation. The protein is Calretinin (CALB2) of Gallus gallus (Chicken).